A 513-amino-acid chain; its full sequence is ATP synthase subunit alpha (513 aa).

169 to 176 is a binding site for ATP; the sequence is GDRQIGKT.

It belongs to the ATPase alpha/beta chains family. F-type ATPases have 2 components, CF(1) - the catalytic core - and CF(0) - the membrane proton channel. CF(1) has five subunits: alpha(3), beta(3), gamma(1), delta(1), epsilon(1). CF(0) has three main subunits: a(1), b(2) and c(9-12). The alpha and beta chains form an alternating ring which encloses part of the gamma chain. CF(1) is attached to CF(0) by a central stalk formed by the gamma and epsilon chains, while a peripheral stalk is formed by the delta and b chains.

The protein localises to the cell inner membrane. It catalyses the reaction ATP + H2O + 4 H(+)(in) = ADP + phosphate + 5 H(+)(out). Functionally, produces ATP from ADP in the presence of a proton gradient across the membrane. The alpha chain is a regulatory subunit. The sequence is that of ATP synthase subunit alpha from Shewanella sediminis (strain HAW-EB3).